The sequence spans 119 residues: MARVKFGKVTRRRRKKILKLAKGYWGAKSKLFRVANQAVMKSLMYAYIGRKLRKRDFRRLWITRINAAARAHGISYSRFINGLKKAGIEINRKMLSEMAIHDEKAFEELVNIAKQHLNA.

Belongs to the bacterial ribosomal protein bL20 family.

Binds directly to 23S ribosomal RNA and is necessary for the in vitro assembly process of the 50S ribosomal subunit. It is not involved in the protein synthesizing functions of that subunit. The chain is Large ribosomal subunit protein bL20 from Thermoanaerobacter sp. (strain X514).